The sequence spans 90 residues: MSEVKRGVIVNYRMGRHTQDPRQCIIEFEGVESRSEAAQLIGKEVIWKHPETGKVIRGKVVDTHGNNGAVRVRFERGLPGQALGTEVTLK.

This sequence belongs to the eukaryotic ribosomal protein eL33 family.

The sequence is that of Large ribosomal subunit protein eL33 from Methanopyrus kandleri (strain AV19 / DSM 6324 / JCM 9639 / NBRC 100938).